The chain runs to 411 residues: MPSRRRHSYTVGSPATTSSNYSNTTFTDRSFPTTPARTSTDTTTSIARRISGIFINCFTPPDSVSSNYIDNSKSSSDNNIRSRRSSTGSSSVQRSYGNANETEHTRFTFDEIYDATKNFSPSFRIGQGGFGTVYKVKLRDGKTFAVKRAKKSMHDDRQGADAEFMSEIQTLAQVTHLSLVKYYGFVVHNDEKILVVEYVANGTLRDHLDCKEGKTLDMATRLDIATDVAHAITYLHMYTQPPIIHRDIKSSNILLTENYRAKVADFGFARLAPDTDSGATHVSTQVKGTAGYLDPEYLTTYQLTEKSDVYSFGVLLVELLTGRRPIELSRGQKERITIRWAIKKFTSGDTISVLDPKLEQNSANNLALEKVLEMAFQCLAPHRRSRPSMKKCSEILWGIRKDYRELLNTSL.

Disordered stretches follow at residues 1 to 44 and 66 to 99; these read MPSR…DTTT and SNYI…YGNA. Composition is skewed to low complexity over residues 16–44 and 66–95; these read TTSS…DTTT and SNYI…VQRS. At Thr108 the chain carries Phosphothreonine. In terms of domain architecture, Protein kinase spans 119–398; the sequence is FSPSFRIGQG…MKKCSEILWG (280 aa). Residues 125-133 and Lys147 each bind ATP; that span reads IGQGGFGTV. The interval 134–159 is caM-binding; it reads YKVKLRDGKTFAVKRAKKSMHDDRQG. The active-site Proton acceptor is Asp247. Ser251 and Ser283 each carry phosphoserine. Phosphothreonine is present on residues Thr284 and Thr289. The residue at position 297 (Tyr297) is a Phosphotyrosine.

It belongs to the protein kinase superfamily. Ser/Thr protein kinase family. Interacts with calmodulin (CaM) in a Ca(2+)-dependent manner.

The protein resides in the cytoplasm. The enzyme catalyses L-seryl-[protein] + ATP = O-phospho-L-seryl-[protein] + ADP + H(+). The catalysed reaction is L-threonyl-[protein] + ATP = O-phospho-L-threonyl-[protein] + ADP + H(+). The chain is Calmodulin-binding receptor-like cytoplasmic kinase 2 (CRCK2) from Arabidopsis thaliana (Mouse-ear cress).